We begin with the raw amino-acid sequence, 369 residues long: Phosphoribosyl pyrophosphate synthase-associated protein 2 (369 aa).

An N-acetylmethionine modification is found at Met1. Ser219, Ser227, and Ser233 each carry phosphoserine.

It belongs to the ribose-phosphate pyrophosphokinase family. In terms of assembly, binds to PRPS1 and PRPS2.

In terms of biological role, seems to play a negative regulatory role in 5-phosphoribose 1-diphosphate synthesis. The protein is Phosphoribosyl pyrophosphate synthase-associated protein 2 (Prpsap2) of Mus musculus (Mouse).